Consider the following 131-residue polypeptide: Peptide methionine sulfoxide reductase MsrB (131 aa).

A MsrB domain is found at 8-130; the sequence is LDTWREELTD…NSLSLKLVPR (123 aa). Residues Cys47, Cys50, Cys96, and Cys99 each coordinate Zn(2+). Residue Cys119 is the Nucleophile of the active site.

This sequence belongs to the MsrB Met sulfoxide reductase family. It depends on Zn(2+) as a cofactor.

It catalyses the reaction L-methionyl-[protein] + [thioredoxin]-disulfide + H2O = L-methionyl-(R)-S-oxide-[protein] + [thioredoxin]-dithiol. This is Peptide methionine sulfoxide reductase MsrB from Ectopseudomonas mendocina (strain ymp) (Pseudomonas mendocina).